A 438-amino-acid chain; its full sequence is DNA primase DnaG (438 aa).

The region spanning 169–243 is the Toprim domain; the sequence is DSIIVVEGRA…DIDYVARAPY (75 aa). Glu-175, Asp-217, and Asp-219 together coordinate Mg(2+).

It belongs to the archaeal DnaG primase family. Forms a ternary complex with MCM helicase and DNA. Mg(2+) serves as cofactor.

It carries out the reaction ssDNA + n NTP = ssDNA/pppN(pN)n-1 hybrid + (n-1) diphosphate.. RNA polymerase that catalyzes the synthesis of short RNA molecules used as primers for DNA polymerase during DNA replication. This is DNA primase DnaG from Methanococcus maripaludis (strain C5 / ATCC BAA-1333).